A 488-amino-acid chain; its full sequence is MNETVVADPMAQANPASVFDLGLPCSTRYRLLKAMDPQDQYEACRQLLDIWRISNIKKLEKFFLWICVYDVVLNLHLKYDILELIITTTIVPPVGTVKFHRTEHAAANVLYLVQERAFDSDQYWVVLKKILHLYRTAFGLDKVDKVLRNLIAVGFRKQGLANPFGKIFPLVLEFKQCPFFVDLCAFIFDTCGAKLSVKNRLLLLQILYTDENRFMDPLVQLVHQCPQLNFRLEACDILYGNGSDEVKKKAKRWIKTLLPDGGDYVQNPENVHLDSVANSVDETLKILVEKNRKKTAPDNLYALLCHHFEKSEKIVASLTRIFQYDFLKFSSLNLTLGEVLAQIYLTIDGQPEAVRDQLMVRLGQELRDAYDTCSKGYVTRLVNVVSGFNLYGESSLGICTSIEDEIYHLYSTTVNGLVQNSPANVRDTLIQQLAVPPDQSAERRELIEFLRPNWSLIWTTIQNRFAGDVCPNQLDLHCRNAMAKYDGN.

It belongs to the IIV-6 467R family.

This is an uncharacterized protein from Invertebrate iridescent virus 3 (IIV-3).